The following is a 243-amino-acid chain: UPF0702 transmembrane protein YkjA (243 aa).

The next 3 helical transmembrane spans lie at W3–F23, M34–L54, and L58–L78.

Belongs to the UPF0702 family.

The protein resides in the cell membrane. The protein is UPF0702 transmembrane protein YkjA (ykjA) of Bacillus subtilis (strain 168).